A 75-amino-acid polypeptide reads, in one-letter code: Nigwaprin-a (75 aa).

The first 24 residues, 1–24 (MSSGGLLLLLGLLTLWAELTPVSG), serve as a signal peptide directing secretion. The WAP domain maps to 27-72 (RPVKPGLCPPRPQKPPCVKECKNDWSCRGEQKCCRYGCIYECRDPI). Intrachain disulfides connect Cys-34–Cys-60, Cys-43–Cys-64, Cys-47–Cys-59, and Cys-53–Cys-68.

It belongs to the venom waprin family. As to expression, expressed by the venom gland.

The protein localises to the secreted. Damages membranes of susceptible bacteria. Has no hemolytic activity. Not toxic to mice. Does not inhibit the proteinases elastase and cathepsin G. The chain is Nigwaprin-a from Cryptophis nigrescens (Eastern small-eyed snake).